A 320-amino-acid chain; its full sequence is Pyrroline-5-carboxylate reductase 2 (320 aa).

Ser2 carries the N-acetylserine modification. Residues 6-11 (IGAGQL) and Ser34 each bind NADP(+). The NADPH site is built by Ala8, Gln10, Leu11, Ser34, Glu36, Asn56, Val70, Lys71, and Ala97. NADP(+) contacts are provided by residues Asn56, 69-72 (AVKP), and 95-97 (CAA). Glu164 contributes to the L-proline binding site. Position 230 (Asn230) interacts with NADPH. The L-proline site is built by Ala237 and Thr238. The interval 298–320 (TTLTPTSSGKLLTRSPVPGGKKD) is disordered. Ser304 is subject to Phosphoserine.

Belongs to the pyrroline-5-carboxylate reductase family. Homodecamer; composed of 5 homodimers. Interacts with LTO1.

It is found in the cytoplasm. It localises to the mitochondrion. The catalysed reaction is L-proline + NADP(+) = (S)-1-pyrroline-5-carboxylate + NADPH + 2 H(+). The enzyme catalyses L-proline + NAD(+) = (S)-1-pyrroline-5-carboxylate + NADH + 2 H(+). Its pathway is amino-acid biosynthesis; L-proline biosynthesis; L-proline from L-glutamate 5-semialdehyde: step 1/1. Oxidoreductase that catalyzes the last step in proline biosynthesis, which corresponds to the reduction of pyrroline-5-carboxylate to L-proline using NAD(P)H. At physiologic concentrations, has higher specific activity in the presence of NADH. Involved in cellular response to oxidative stress. In some cell types, such as erythrocytes, its primary function may be the generation of NADP(+). The protein is Pyrroline-5-carboxylate reductase 2 (PYCR2) of Bos taurus (Bovine).